Consider the following 244-residue polypeptide: NAD(P)H-quinone oxidoreductase subunit K (244 aa).

[4Fe-4S] cluster contacts are provided by C60, C61, C125, and C156. The disordered stretch occupies residues 213–244 (TSANSIPSSKKEKITELPDNNEKAEIIDTLEN). A compositionally biased stretch (basic and acidic residues) spans 221–238 (SKKEKITELPDNNEKAEI).

This sequence belongs to the complex I 20 kDa subunit family. In terms of assembly, NDH-1 can be composed of about 15 different subunits; different subcomplexes with different compositions have been identified which probably have different functions. It depends on [4Fe-4S] cluster as a cofactor.

It localises to the cellular thylakoid membrane. The catalysed reaction is a plastoquinone + NADH + (n+1) H(+)(in) = a plastoquinol + NAD(+) + n H(+)(out). It catalyses the reaction a plastoquinone + NADPH + (n+1) H(+)(in) = a plastoquinol + NADP(+) + n H(+)(out). NDH-1 shuttles electrons from an unknown electron donor, via FMN and iron-sulfur (Fe-S) centers, to quinones in the respiratory and/or the photosynthetic chain. The immediate electron acceptor for the enzyme in this species is believed to be plastoquinone. Couples the redox reaction to proton translocation, and thus conserves the redox energy in a proton gradient. Cyanobacterial NDH-1 also plays a role in inorganic carbon-concentration. In Prochlorococcus marinus (strain MIT 9301), this protein is NAD(P)H-quinone oxidoreductase subunit K.